The primary structure comprises 572 residues: Hemagglutinin-neuraminidase (572 aa).

The Intravirion segment spans residues Met1–Lys31. A helical transmembrane segment spans residues Ile32 to Leu52. The Virion surface portion of the chain corresponds to Ile53 to Ser572. 2 disulfide bridges follow: Cys190-Cys214 and Cys256-Cys269. The interval Asn252–Ser257 is involved in neuraminidase activity. 2 N-linked (GlcNAc...) asparagine; by host glycosylation sites follow: Asn308 and Asn351. Disulfide bonds link Cys355–Cys469 and Cys463–Cys473. A glycan (N-linked (GlcNAc...) asparagine; by host) is linked at Asn523. Residues Cys535 and Cys544 are joined by a disulfide bond.

This sequence belongs to the paramyxoviruses hemagglutinin-neuraminidase family. As to quaternary structure, homotetramer; composed of disulfide-linked homodimers. Interacts with F protein trimer.

The protein localises to the virion membrane. Its subcellular location is the host cell membrane. The catalysed reaction is Hydrolysis of alpha-(2-&gt;3)-, alpha-(2-&gt;6)-, alpha-(2-&gt;8)- glycosidic linkages of terminal sialic acid residues in oligosaccharides, glycoproteins, glycolipids, colominic acid and synthetic substrates.. Its function is as follows. Attaches the virus to sialic acid-containing cell receptors and thereby initiating infection. Binding of HN protein to the receptor induces a conformational change that allows the F protein to trigger virion/cell membranes fusion. Neuraminidase activity ensures the efficient spread of the virus by dissociating the mature virions from the neuraminic acid containing glycoproteins. The chain is Hemagglutinin-neuraminidase (HN) from Human parainfluenza 3 virus (strain Tex/9305/82) (HPIV-3).